The chain runs to 437 residues: Sperm-associated antigen 4 protein (437 aa).

Over residues 1-12 (MRRSSRPGSASS) the composition is skewed to low complexity. Residues 1–88 (MRRSSRPGSA…KPAPRSHNWQ (88 aa)) form a disordered region. Polar residues-rich tracts occupy residues 19–31 (NFFS…SITS) and 72–88 (WAGS…HNWQ). The next 2 membrane-spanning stretches (helical) occupy residues 135-155 (FLSL…DVLV) and 166-186 (FLFT…LGLL). Residues 197–244 (KEMLTLSEYHERVRSQGQQLQQLQAELDKLHKEVSTVRAANSERVAKL) are a coiled coil. Residues 265 to 425 (GASIDLQKTS…YRVRAHGVRT (161 aa)) form the SUN domain.

Homodimer. Interacts with ODF1. May associate with microtubules. Interacts with SUN3 and SYNE1; suggesting the formation of a spermatogenesis-specific LINC complex; a SUN domain-based heterotrimer with SUN3 may associate with SYNE1. Interacts with SEPT12 and LMNB1; during spermatogenesis. In terms of tissue distribution, predominantly epressed in testis. Expressed in ejaculated spermatozoa (at protein level).

It is found in the membrane. The protein resides in the cytoplasm. Its subcellular location is the cytoskeleton. The protein localises to the flagellum axoneme. It localises to the nucleus envelope. It is found in the nucleus inner membrane. In terms of biological role, involved in spermatogenesis. Required for sperm head formation but not required to establish and maintain general polarity of the sperm head. Required for anchoring and organization of the manchette. Required for targeting of SUN3 and probably SYNE1 through a probable SUN1:SYNE3 LINC complex to the nuclear envelope and involved in accurate posterior sperm head localization of the complex. May anchor SUN3 the nuclear envelope. Involved in maintenance of the nuclear envelope integrity. May assist the organization and assembly of outer dense fibers (ODFs), a specific structure of the sperm tail. This chain is Sperm-associated antigen 4 protein (SPAG4), found in Homo sapiens (Human).